A 406-amino-acid chain; its full sequence is Phosphopentomutase (406 aa).

Residues Asp10, Asp305, His310, Asp346, His347, and His358 each coordinate Mn(2+).

Belongs to the phosphopentomutase family. Mn(2+) serves as cofactor.

It is found in the cytoplasm. It carries out the reaction 2-deoxy-alpha-D-ribose 1-phosphate = 2-deoxy-D-ribose 5-phosphate. The catalysed reaction is alpha-D-ribose 1-phosphate = D-ribose 5-phosphate. It participates in carbohydrate degradation; 2-deoxy-D-ribose 1-phosphate degradation; D-glyceraldehyde 3-phosphate and acetaldehyde from 2-deoxy-alpha-D-ribose 1-phosphate: step 1/2. In terms of biological role, isomerase that catalyzes the conversion of deoxy-ribose 1-phosphate (dRib-1-P) and ribose 1-phosphate (Rib-1-P) to deoxy-ribose 5-phosphate (dRib-5-P) and ribose 5-phosphate (Rib-5-P), respectively. The polypeptide is Phosphopentomutase (Agrobacterium fabrum (strain C58 / ATCC 33970) (Agrobacterium tumefaciens (strain C58))).